Reading from the N-terminus, the 205-residue chain is MSVKVASPFSPDGVQCLPKLFTISAPAGAGKTTLVHMLQEEFPSAFEKTVSSTTRSPRPGEVHGVDYVFMSEDEFKDVLDKDGFLEWVFLFGTYYGTSKEGISRILQKGKHCIAVIDVQGALTLKKQMQTVAIFIQAPSQEELERRLNTRDSEKDLQKKERLEHSNVEIAAASQFDYVVVNDDLTTAYQVLRSIFIAEEHRMSHG.

In terms of domain architecture, Guanylate kinase-like spans 18 to 196 (PKLFTISAPA…AYQVLRSIFI (179 aa)). ATP is bound at residue 25 to 32 (APAGAGKT).

Belongs to the guanylate kinase family.

The protein localises to the cytoplasm. It carries out the reaction GMP + ATP = GDP + ADP. Functionally, essential for recycling GMP and indirectly, cGMP. The polypeptide is Guanylate kinase (gmk) (Chlamydia muridarum (strain MoPn / Nigg)).